The chain runs to 396 residues: L-cysteine desulfidase (396 aa).

The active-site Proton acceptor is the cysteine 23. [4Fe-4S] cluster is bound by residues cysteine 288, cysteine 330, and cysteine 337.

The protein belongs to the L-cysteine desulfidase family. As to quaternary structure, homotrimer. It depends on [4Fe-4S] cluster as a cofactor.

It catalyses the reaction L-cysteine + H2O = hydrogen sulfide + pyruvate + NH4(+) + H(+). Its function is as follows. Catalyzes the cleavage of L-cysteine to form 2-aminoprop-2-enoate and sulfide. The former then spontaneously hydrolyzes to pyruvate and NH(3). May be responsible for the production of sulfide required for the biosynthesis of iron-sulfur centers in this archaea. The sequence is that of L-cysteine desulfidase from Methanococcus maripaludis (strain C6 / ATCC BAA-1332).